The primary structure comprises 62 residues: Large ribosomal subunit protein bL28 (62 aa).

This sequence belongs to the bacterial ribosomal protein bL28 family.

This Koribacter versatilis (strain Ellin345) protein is Large ribosomal subunit protein bL28.